Here is a 113-residue protein sequence, read N- to C-terminus: Large ribosomal subunit protein bL19 (113 aa).

This sequence belongs to the bacterial ribosomal protein bL19 family.

In terms of biological role, this protein is located at the 30S-50S ribosomal subunit interface and may play a role in the structure and function of the aminoacyl-tRNA binding site. The protein is Large ribosomal subunit protein bL19 of Corynebacterium efficiens (strain DSM 44549 / YS-314 / AJ 12310 / JCM 11189 / NBRC 100395).